We begin with the raw amino-acid sequence, 388 residues long: P2X receptor E (388 aa).

The Cytoplasmic segment spans residues 1–28; that stretch reads MNFRNIDWDSLFSYSTIKIVRIRDKRLG. Residues 29 to 49 form a helical membrane-spanning segment; sequence ILHFAFLIGIILYIIVGTIFL. The Lumenal segment spans residues 50–312; it reads QKKYLVLESP…QLGQFDFQTM (263 aa). The interval 291-304 is pore-forming motif; sequence RHGVRIIFIQTGQL. A helical membrane pass occupies residues 313–333; sequence LLTFVSGIGLVTAASLIVDII. Topologically, residues 334 to 388 are cytoplasmic; that stretch reads ATRIMPQRSRYQELKFQDSSINNTQKTPTNDHTPLLKDNEDTINENSYQNNSYEK. The segment at 349–388 is disordered; it reads FQDSSINNTQKTPTNDHTPLLKDNEDTINENSYQNNSYEK. Composition is skewed to polar residues over residues 350–365 and 377–388; these read QDSSINNTQKTPTNDH and NENSYQNNSYEK.

The protein belongs to the P2X receptor family.

The protein resides in the contractile vacuole membrane. Its function is as follows. P2X receptors are ATP-gated ion channels that play a role in intracellular calcium signaling. Not required for the purinergic response to extracellular nucleotides. Not essential for osmoregulation. Inward currents evoked by intracellular ATP. ATP analog beta, gamma-imido-ATP is a weak partial agonist of p2xE. Exclusively selective for ATP over other nucleotides. Insensitive to copper and P2 receptor antagonists PPADS and suramin but strongly inhibited by sodium ions. More permeable to ammonium than either sodium or potassium ions and less permeable to choline. Permeable to calcium ions, but not chloride. This Dictyostelium discoideum (Social amoeba) protein is P2X receptor E (p2xE).